We begin with the raw amino-acid sequence, 216 residues long: LexA repressor (216 aa).

Positions 28–48 (RAEIAAEFGFSSPNAAEEHLR) form a DNA-binding region, H-T-H motif. Catalysis depends on for autocatalytic cleavage activity residues Ser-134 and Lys-171.

It belongs to the peptidase S24 family. Homodimer.

The catalysed reaction is Hydrolysis of Ala-|-Gly bond in repressor LexA.. Its function is as follows. Represses a number of genes involved in the response to DNA damage (SOS response), including recA and lexA. In the presence of single-stranded DNA, RecA interacts with LexA causing an autocatalytic cleavage which disrupts the DNA-binding part of LexA, leading to derepression of the SOS regulon and eventually DNA repair. In Ralstonia pickettii (strain 12J), this protein is LexA repressor.